Reading from the N-terminus, the 38-residue chain is Large ribosomal subunit protein bL36 (38 aa).

The protein belongs to the bacterial ribosomal protein bL36 family.

This is Large ribosomal subunit protein bL36 from Chlorobaculum parvum (strain DSM 263 / NCIMB 8327) (Chlorobium vibrioforme subsp. thiosulfatophilum).